A 510-amino-acid polypeptide reads, in one-letter code: GMP synthase [glutamine-hydrolyzing] (510 aa).

In terms of domain architecture, Glutamine amidotransferase type-1 spans 5–195 (LVLVIDFGGQ…LFKICGLKED (191 aa)). Cysteine 82 functions as the Nucleophile in the catalytic mechanism. Catalysis depends on residues histidine 169 and glutamate 171. The GMPS ATP-PPase domain maps to 196-385 (WSMSSFAKEK…LGIPHKLVWR (190 aa)). 223–229 (SGGVDSS) serves as a coordination point for ATP.

Homodimer.

The enzyme catalyses XMP + L-glutamine + ATP + H2O = GMP + L-glutamate + AMP + diphosphate + 2 H(+). It participates in purine metabolism; GMP biosynthesis; GMP from XMP (L-Gln route): step 1/1. In terms of biological role, catalyzes the synthesis of GMP from XMP. This Clostridium acetobutylicum (strain ATCC 824 / DSM 792 / JCM 1419 / IAM 19013 / LMG 5710 / NBRC 13948 / NRRL B-527 / VKM B-1787 / 2291 / W) protein is GMP synthase [glutamine-hydrolyzing].